The following is a 4731-amino-acid chain: Dynein axonemal heavy chain 8 (4731 aa).

The tract at residues 1–145 (MESEEGNAEP…SKFRRSMTGI (145 aa)) is disordered. Residues 9 to 55 (EPPPPSEEAPPPVVEEAPPPLPPEDTAPPPPEEQAPPPEGDAAPPPT) show a composition bias toward pro residues. Positions 66 to 75 (EAPHPEDPKL) are enriched in basic and acidic residues. Over residues 94–106 (SDEEVTLPEDEES) the composition is skewed to acidic residues. A compositionally biased stretch (polar residues) spans 122–133 (SVLSDGISQSSR). A coiled-coil region spans residues 145 to 169 (IPNLQETLKEKQARFREARENRKMK). Residue Ser917 is modified to Phosphoserine. The disordered stretch occupies residues 1177-1201 (FQNNSRGSDQPPASGKPLKKEERSF). Positions 1543–1567 (DVDIEKINAELQEFQNRCRKLPRAL) form a coiled coil. 4 AAA regions span residues 2049–2271 (YQNE…VLRT), 2331–2550 (SAVD…KLSL), 2657–2910 (FYPT…IWQG), and 3021–3275 (QFNE…YRRR). ATP is bound by residues 2087 to 2094 (GPAGTGKT) and 2369 to 2376 (GPSGSGKT). A stalk region spans residues 3290–3587 (YKSIYTDKVK…MDLLNDADMC (298 aa)). Coiled-coil stretches lie at residues 3313–3405 (DKLM…ALNT), 3531–3583 (LKAN…LLND), and 3836–3871 (RVIL…DNLL). AAA stretches follow at residues 3673-3903 (LVDP…EVSE) and 4118-4332 (ARKY…FIQN).

It belongs to the dynein heavy chain family. Consists of at least two heavy chains and a number of intermediate and light chains. As to expression, isoform 1 and/or isoform 2 are expressed in spermatocytes and mature sperm (at protein level). Testis-specific. Accumulates exclusively in mid to late spermatocytes.

It is found in the cytoplasm. The protein resides in the cytoskeleton. It localises to the flagellum axoneme. Force generating protein component of the outer dynein arms (ODAs) in the sperm flagellum. Produces force towards the minus ends of microtubules. Dynein has ATPase activity; the force-producing power stroke is thought to occur on release of ADP. Involved in sperm motility; implicated in sperm flagellar assembly. The polypeptide is Dynein axonemal heavy chain 8 (Dnah8) (Mus musculus (Mouse)).